A 141-amino-acid polypeptide reads, in one-letter code: Nucleoside triphosphatase NudI (141 aa).

The Nudix hydrolase domain maps to 1-141; it reads MRQRTIVCPL…RKTLRLKGLL (141 aa). The short motif at 38-59 is the Nudix box element; the sequence is GGVEPGERIEEALRREIREELG.

The protein belongs to the Nudix hydrolase family. NudI subfamily. Monomer. It depends on Mg(2+) as a cofactor.

It carries out the reaction a ribonucleoside 5'-triphosphate + H2O = a ribonucleoside 5'-phosphate + diphosphate + H(+). The catalysed reaction is a 2'-deoxyribonucleoside 5'-triphosphate + H2O = a 2'-deoxyribonucleoside 5'-phosphate + diphosphate + H(+). It catalyses the reaction dUTP + H2O = dUMP + diphosphate + H(+). The enzyme catalyses dTTP + H2O = dTMP + diphosphate + H(+). It carries out the reaction dCTP + H2O = dCMP + diphosphate + H(+). In terms of biological role, catalyzes the hydrolysis of nucleoside triphosphates, with a preference for pyrimidine deoxynucleoside triphosphates (dUTP, dTTP and dCTP). The protein is Nucleoside triphosphatase NudI of Escherichia coli O17:K52:H18 (strain UMN026 / ExPEC).